A 168-amino-acid polypeptide reads, in one-letter code: Small ribosomal subunit protein uS5 (168 aa).

One can recognise an S5 DRBM domain in the interval Leu13–Val76.

It belongs to the universal ribosomal protein uS5 family. In terms of assembly, part of the 30S ribosomal subunit. Contacts proteins S4 and S8.

Functionally, with S4 and S12 plays an important role in translational accuracy. Located at the back of the 30S subunit body where it stabilizes the conformation of the head with respect to the body. The protein is Small ribosomal subunit protein uS5 of Alkaliphilus oremlandii (strain OhILAs) (Clostridium oremlandii (strain OhILAs)).